A 450-amino-acid chain; its full sequence is Trehalose/maltose-binding protein MalE (450 aa).

The first 24 residues, 1–24 (MNVKKVLLGLFLVGVLGIAVVASG), serve as a signal peptide directing secretion. Alpha,alpha-trehalose is bound by residues E57, T84, R89, D110, Y161, D163, Y217, E279, W297, Y299, G334, W335, W371, and R404.

It belongs to the bacterial solute-binding protein 1 family. The complex is composed of two ATP-binding proteins (MalK), two transmembrane proteins (MalG and MalF) and a solute-binding protein (MalE). Glycosylated.

The protein localises to the cell membrane. Functionally, part of the ABC transporter complex MalEFGK involved in trehalose/maltose import. Binds maltose and trehalose. This chain is Trehalose/maltose-binding protein MalE (malE), found in Thermococcus litoralis (strain ATCC 51850 / DSM 5473 / JCM 8560 / NS-C).